A 225-amino-acid chain; its full sequence is E3 ubiquitin-protein ligase ATL59 (225 aa).

A helical transmembrane segment spans residues 22-42; sequence FTFIVCVPICVILIVLLVLYI. The RING-type; atypical zinc finger occupies 97 to 139; sequence CSVCLGDYQAEEKLQQMPSCGHTFHMECIDLWLTSHTTCPLCR.

Belongs to the RING-type zinc finger family. ATL subfamily.

It is found in the membrane. It carries out the reaction S-ubiquitinyl-[E2 ubiquitin-conjugating enzyme]-L-cysteine + [acceptor protein]-L-lysine = [E2 ubiquitin-conjugating enzyme]-L-cysteine + N(6)-ubiquitinyl-[acceptor protein]-L-lysine.. The protein operates within protein modification; protein ubiquitination. Functionally, E3 ubiquitin-protein ligase able to catalyze polyubiquitination with ubiquitin-conjugating enzyme E2 UBC8, UBC10, UBC11, and UBC34 in vitro. In Arabidopsis thaliana (Mouse-ear cress), this protein is E3 ubiquitin-protein ligase ATL59 (ATL59).